The primary structure comprises 1020 residues: Glucan endo-1,3-beta-D-glucosidase (1020 aa).

The signal sequence occupies residues 1-25 (MKGKNVQLLFALVVIILLFPTGASA). Positions 28-251 (HAVSVGKGSY…ADYIAIAKLP (224 aa)) are beta-sandwich subdomain. Residues 28–722 (HAVSVGKGSY…HWIHNLAELG (695 aa)) form the GH81 domain. The tract at residues 252–350 (EKDGNMLAKF…EGKRFTTELT (99 aa)) is alpha/beta subdomain. Positions 360–722 (DLGDYDRERL…HWIHNLAELG (363 aa)) are (alpha/beta)6 barrel subdomain. The (1,3-beta-D-glucosyl)n site is built by tyrosine 387, lysine 391, histidine 458, aspartate 466, histidine 470, aspartate 530, asparagine 540, glutamate 542, glutamate 546, glutamate 699, and arginine 704. Aspartate 466 is a catalytic residue. Active-site residues include glutamate 542 and glutamate 546. A disordered region spans residues 771–790 (HSFNIGNGDGPTNPDPSEPD). Positions 796 to 922 (ERIQAEAYDA…LMNVNWFVFR (127 aa)) constitute a CBM6 domain. (1,3-beta-D-glucosyl)n-binding residues include glutamate 812, tryptophan 825, aspartate 853, asparagine 878, aspartate 912, and asparagine 915. The region spanning 928-1020 (NGDSHTHPDY…YTTEWFTYSR (93 aa)) is the CBM56 domain.

Belongs to the glycosyl hydrolase 81 family.

Its subcellular location is the secreted. The catalysed reaction is Hydrolysis of (1-&gt;3)-beta-D-glucosidic linkages in (1-&gt;3)-beta-D-glucans.. Functionally, cleaves internal linkages in 1,3-beta-glucan. May contribute to plant biomass degradation. The chain is Glucan endo-1,3-beta-D-glucosidase from Halalkalibacterium halodurans (strain ATCC BAA-125 / DSM 18197 / FERM 7344 / JCM 9153 / C-125) (Bacillus halodurans).